A 745-amino-acid polypeptide reads, in one-letter code: Cytoskeleton-associated protein 2-like (745 aa).

Disordered regions lie at residues 26-305 (KGKL…VNRV), 319-362 (PATE…LGPQ), 422-483 (FPPQ…TYKR), and 608-638 (EAVTSDTSAAGTNTTSAEELAKEESEQPCPS). Polar residues-rich tracts occupy residues 67–89 (SKTTRPINIKFQTKPASITASQK) and 101–136 (GLTSRCFSSNTDCKQSSKPQQQPRAVSFTAGLSRNP). The KEN box motif lies at 183-185 (KEN). Residues 192-202 (KPEKPDPELHS) show a composition bias toward basic and acidic residues. Lys-195 is covalently cross-linked (Glycyl lysine isopeptide (Lys-Gly) (interchain with G-Cter in SUMO1); alternate). A Glycyl lysine isopeptide (Lys-Gly) (interchain with G-Cter in SUMO2); alternate cross-link involves residue Lys-195. Polar residues-rich tracts occupy residues 205–216 (KPNTGSSNQTQK), 224–233 (LSKSSVTQTA), 242–253 (FIRNTQIRTQAV), and 284–301 (NKTQTSKKPMTKNTQDIT). The segment covering 427–442 (HFLNKTAPRTQASTAA) has biased composition (polar residues). Over residues 459-475 (KKPEGEDRRKQLEEWQK) the composition is skewed to basic and acidic residues. Residues 608-624 (EAVTSDTSAAGTNTTSA) show a composition bias toward polar residues. Ser-745 is modified (phosphoserine).

The protein belongs to the CKAP2 family. Ubiquitinated by the anaphase promoting complex/cyclosome (APC/C). In terms of tissue distribution, highly expressed in regions of active neurogenesis and neural stem/progenitor cells (NSPCs), both embryonic and adult, not detected in lung, liver, kidney, heart, and skeletal muscle.

It localises to the cytoplasm. The protein resides in the cytoskeleton. It is found in the spindle pole. In terms of biological role, microtubule-associated protein required for mitotic spindle formation and cell-cycle progression in neural progenitor cells. The chain is Cytoskeleton-associated protein 2-like (Ckap2l) from Mus musculus (Mouse).